The sequence spans 640 residues: (Z)-beta-ocimene synthase TPS13PK, chloroplastic (640 aa).

A chloroplast-targeting transit peptide spans 1–95 (MAALVSTVSS…PFKDEAYVKR (95 aa)). Residues 50-69 (MSTNNNNNNNQKNSSRRSAN) form a disordered region. Polar residues predominate over residues 60–69 (QKNSSRRSAN). The (2E)-geranyl diphosphate site is built by arginine 334, aspartate 371, aspartate 375, arginine 515, and aspartate 518. Mg(2+)-binding residues include aspartate 371 and aspartate 375. Residues 371–375 (DDIYD) carry the DDXXD motif motif. Mg(2+)-binding residues include aspartate 518, threonine 522, and glutamate 526.

This sequence belongs to the terpene synthase family. Monomer. The cofactor is Mg(2+).

It is found in the plastid. The protein resides in the chloroplast. The enzyme catalyses (2E)-geranyl diphosphate = (Z)-beta-ocimene + diphosphate. Its pathway is secondary metabolite biosynthesis; terpenoid biosynthesis. Functionally, involved in monoterpene (C10) olefins biosynthesis, constituants of cannabinoids and terpenoids-rich resins. Catalyzes mainly the conversion of (2E)-geranyl diphosphate to (Z)-beta-ocimene. The polypeptide is (Z)-beta-ocimene synthase TPS13PK, chloroplastic (Cannabis sativa (Hemp)).